The sequence spans 71 residues: Gas vesicle protein A (71 aa).

The protein belongs to the gas vesicle GvpA family. In terms of assembly, the gas vesicle shell is 2 nm thick and consists of a single layer of this protein. It forms helical ribs nearly perpendicular to the long axis of the vesicle.

Its subcellular location is the gas vesicle shell. Gas vesicles are hollow, gas filled proteinaceous nanostructures found in some microorganisms. During planktonic growth they allow positioning of the organism at a favorable depth for light or nutrient acquisition. GvpA forms the protein shell. Its function is as follows. Cluster expression in E.coli (gvpA1-gvpA2-gvpC-gvpN-gvpJ-gvpK-gvpF-gvpG-gvpV-gvpW) allows cells to float and produces irregularly shaped gas vesicles. This is Gas vesicle protein A from Nostoc sp. (strain PCC 7120 / SAG 25.82 / UTEX 2576).